Here is a 202-residue protein sequence, read N- to C-terminus: Putative scarecrow-like protein 16 (202 aa).

The interval 1 to 26 is VHIID; it reads MQIPTLIDSMANKLHKKPPPLLKLTV. In terms of domain architecture, GRAS spans 1-202; sequence MQIPTLIDSM…RVERLEPKSR (202 aa). The interval 45-82 is leucine repeat II (LRII); it reads ELGSKLVNFATTRNVAMEFRIISSSYSDGLSSLIEQLR. Residues 92 to 184 form a PFYRE region; it reads LVVNCHMMLH…EADISWKIDN (93 aa). An SAW region spans residues 187–202; sequence AKEGAERVERLEPKSR.

Belongs to the GRAS family. In terms of tissue distribution, expressed in seedlings, leaves and flowers.

The protein localises to the nucleus. Probable transcription factor involved in plant development. The sequence is that of Putative scarecrow-like protein 16 (SCL16) from Arabidopsis thaliana (Mouse-ear cress).